A 116-amino-acid polypeptide reads, in one-letter code: Protein AV2 (116 aa).

Belongs to the geminiviridae protein AV2/V2 family. Interacts with host SGS3.

The protein resides in the host cytoplasm. It localises to the host perinuclear region. Its function is as follows. Through its interaction with host SGS3, acts as a suppressor of RNA-mediated gene silencing, also known as post-transcriptional gene silencing (PTGS), a mechanism of plant viral defense that limits the accumulation of viral RNAs. This chain is Protein AV2, found in Mungbean yellow mosaic virus (strain Vigna) (MYMV).